The primary structure comprises 406 residues: Elongation factor Tu-A (406 aa).

The tr-type G domain maps to 10–215 (KPHVNVGTIG…AIDEYIPTPV (206 aa)). The G1 stretch occupies residues 19–26 (GHVDHGKT). GTP is bound at residue 19 to 26 (GHVDHGKT). Residue Thr26 coordinates Mg(2+). The tract at residues 61-65 (GITIN) is G2. Residues 82-85 (DCPG) are G3. Residues 82–86 (DCPGH) and 137–140 (NKVD) contribute to the GTP site. The interval 137-140 (NKVD) is G4. The tract at residues 175 to 177 (SAL) is G5. Thr395 is subject to Phosphothreonine.

This sequence belongs to the TRAFAC class translation factor GTPase superfamily. Classic translation factor GTPase family. EF-Tu/EF-1A subfamily. In terms of assembly, monomer. Binds to the 70S ribosome, contacts tmRNA during trans-translation. In terms of processing, phosphorylated on a threonine.

It localises to the cytoplasm. The catalysed reaction is GTP + H2O = GDP + phosphate + H(+). Its function is as follows. GTP hydrolase that promotes the GTP-dependent binding of aminoacyl-tRNA to the A-site of ribosomes during protein biosynthesis. Functionally, EF-Tu-GDP binds to the acceptor arm of tmRNA by interacting with its acceptor arm, suggesting that GTP hydrolysis by EF-Tu is essential for tmRNA function. Protects glycyl-tRNA(Gly) from hydrolysis by E.coli D-aminoacyl-tRNA deacylase (dtd). This chain is Elongation factor Tu-A, found in Thermus thermophilus (strain ATCC 27634 / DSM 579 / HB8).